The sequence spans 630 residues: PR domain zinc finger protein 5 (630 aa).

The SET domain maps to 8–124; the sequence is DRFSLKSSRV…TDTELLIGYL (117 aa). Residues 167–190 form a C2H2-type 1 zinc finger; that stretch reads YACPQCESSFTSEDILAEHLQTLH. Residues 199 to 221 form a C2H2-type 2; atypical zinc finger; sequence FKCKNCGKKFPVKQALQRHVLQC. A C2H2-type 3; atypical zinc finger spans residues 234–256; it reads FQCSVCNSSFSSASSFEQHQETC. 13 consecutive C2H2-type zinc fingers follow at residues 262–287, 295–317, 320–342, 348–370, 376–398, 404–426, 432–455, 461–483, 489–511, 517–539, 545–567, 573–595, and 602–625; these read FVCK…ENVH, LICS…RKIH, FDCQ…MITH, YNCE…KVIH, YKCK…KKTH, FQCE…LLIH, FKCH…QVVH, YRCE…KKTH, KICP…IRSH, YQCP…IRTH, YKCS…KRTH, FQCD…KMTH, and AECQ…DNIH.

It belongs to the class V-like SAM-binding methyltransferase superfamily. In terms of assembly, interacts with EHMT2/G9A, GFI1 and HDAC1. As to expression, widely expressed with highest levels in colon and ovary. Tends to be silenced in breast, colorectal, gastric and liver cancer tissues.

It localises to the nucleus. In terms of biological role, sequence-specific DNA-binding transcription factor. Represses transcription at least in part by recruitment of the histone methyltransferase EHMT2/G9A and histone deacetylases such as HDAC1. Regulates hematopoiesis-associated protein-coding and microRNA (miRNA) genes. May regulate the expression of proteins involved in extracellular matrix development and maintenance, including fibrillar collagens, such as COL4A1 and COL11A1, connective tissue components, such as HAPLN1, and molecules regulating cell migration and adhesion, including EDIL3 and TGFB2. May cause G2/M arrest and apoptosis in cancer cells. This is PR domain zinc finger protein 5 (PRDM5) from Homo sapiens (Human).